Here is a 604-residue protein sequence, read N- to C-terminus: Ras guanine nucleotide exchange factor H (604 aa).

Residues 1 to 26 (MSNTNINVQSSTPKKSLGSSQYSLAG) show a composition bias toward polar residues. The tract at residues 1–61 (MSNTNINVQS…QENSIDDSGS (61 aa)) is disordered. Residues 27-49 (SSSSNLNNINNNNNNNNNNNNNS) show a composition bias toward low complexity. A compositionally biased stretch (polar residues) spans 50 to 61 (TGQENSIDDSGS). The LisH domain maps to 115–147 (NDTMLLKLIMQYFHEENLTTSLKKIQEETKVQF). The N-terminal Ras-GEF domain occupies 221 to 335 (PDGTIKAATF…AVINLKIENY (115 aa)). The Ras-GEF domain maps to 365–591 (DEEEIARQLC…EQPQLTLDLS (227 aa)).

As to quaternary structure, component of the Sca1 complex composed of at least gefA, gefH, scaA, phr, and the protein phosphatase 2A subunits pppA and pho2B. Interacts directly with gefA and phr.

The protein localises to the cell membrane. Promotes the exchange of Ras-bound GDP by GTP. Component of the Sca1 complex, a regulator of cell motility, chemotaxis and signal relay. The Sca1 complex is recruited to the plasma membrane in a chemoattractant- and F-actin-dependent manner and is enriched at the leading edge of chemotaxing cells where it regulates F-actin dynamics and signal relay by controlling the activation of rasC and the downstream target of rapamycin complex 2 (TORC2)-Akt/protein kinase B (PKB) pathway. The chain is Ras guanine nucleotide exchange factor H (gefH) from Dictyostelium discoideum (Social amoeba).